The sequence spans 304 residues: tRNA pseudouridine synthase B (304 aa).

Residue aspartate 38 is the Nucleophile of the active site.

Belongs to the pseudouridine synthase TruB family. Type 1 subfamily.

It catalyses the reaction uridine(55) in tRNA = pseudouridine(55) in tRNA. Its function is as follows. Responsible for synthesis of pseudouridine from uracil-55 in the psi GC loop of transfer RNAs. The sequence is that of tRNA pseudouridine synthase B from Listeria monocytogenes serovar 1/2a (strain ATCC BAA-679 / EGD-e).